Reading from the N-terminus, the 121-residue chain is DNA-directed RNA polymerase subunit Rpo8 (121 aa).

The protein belongs to the archaeal Rpo8 RNA polymerase subunit family. In terms of assembly, part of the 13-subunit RNA polymerase complex. This subunit is phosphorylated.

The protein resides in the cytoplasm. It catalyses the reaction RNA(n) + a ribonucleoside 5'-triphosphate = RNA(n+1) + diphosphate. DNA-dependent RNA polymerase (RNAP) catalyzes the transcription of DNA into RNA using the four ribonucleoside triphosphates as substrates. The protein is DNA-directed RNA polymerase subunit Rpo8 of Sulfolobus acidocaldarius (strain ATCC 33909 / DSM 639 / JCM 8929 / NBRC 15157 / NCIMB 11770).